The following is a 326-amino-acid chain: Acetyl-coenzyme A carboxylase carboxyl transferase subunit alpha (326 aa).

The CoA carboxyltransferase C-terminal domain maps to 44-298; that stretch reads KLETRAMQLR…KQALLDNLDE (255 aa).

The protein belongs to the AccA family. Acetyl-CoA carboxylase is a heterohexamer composed of biotin carboxyl carrier protein (AccB), biotin carboxylase (AccC) and two subunits each of ACCase subunit alpha (AccA) and ACCase subunit beta (AccD).

The protein localises to the cytoplasm. The catalysed reaction is N(6)-carboxybiotinyl-L-lysyl-[protein] + acetyl-CoA = N(6)-biotinyl-L-lysyl-[protein] + malonyl-CoA. The protein operates within lipid metabolism; malonyl-CoA biosynthesis; malonyl-CoA from acetyl-CoA: step 1/1. Component of the acetyl coenzyme A carboxylase (ACC) complex. First, biotin carboxylase catalyzes the carboxylation of biotin on its carrier protein (BCCP) and then the CO(2) group is transferred by the carboxyltransferase to acetyl-CoA to form malonyl-CoA. This is Acetyl-coenzyme A carboxylase carboxyl transferase subunit alpha from Nostoc sp. (strain PCC 7120 / SAG 25.82 / UTEX 2576).